We begin with the raw amino-acid sequence, 144 residues long: Large ribosomal subunit protein uL16 (144 aa).

This sequence belongs to the universal ribosomal protein uL16 family. As to quaternary structure, part of the 50S ribosomal subunit.

Functionally, binds 23S rRNA and is also seen to make contacts with the A and possibly P site tRNAs. The chain is Large ribosomal subunit protein uL16 from Porphyromonas gingivalis (strain ATCC 33277 / DSM 20709 / CIP 103683 / JCM 12257 / NCTC 11834 / 2561).